A 50-amino-acid chain; its full sequence is U37-theraphotoxin-Cg1b (50 aa).

A signal peptide spans 1–19 (MRVLLIIAGLALLSVVCYT).

It belongs to the neurotoxin 10 (Hwtx-1) family. 67 (Jztx-67) subfamily. As to expression, expressed by the venom gland.

It localises to the secreted. This is U37-theraphotoxin-Cg1b from Chilobrachys guangxiensis (Chinese earth tiger tarantula).